The sequence spans 592 residues: Putative phosphatidylinositol 4-kinase alpha-like protein P2 (592 aa).

The tract at residues 180–318 (EQLVEENTGS…ISWQAAIFKL (139 aa)) is pleckstrin homology (PH) domain conferring phosphoinositide binding specificity. Residues 275 to 576 (KVKRCGVSEL…VIQSCFLSNR (302 aa)) enclose the PI3K/PI4K catalytic domain. The interval 281 to 287 (VSELEKE) is G-loop. The interval 441-449 (QIKDRHNGN) is catalytic loop. Residues 460 to 484 (HIDFGFMFESSPGGNLGWEPDIKLT) form an activation loop region.

The protein belongs to the PI3/PI4-kinase family. Type III PI4K subfamily.

This Homo sapiens (Human) protein is Putative phosphatidylinositol 4-kinase alpha-like protein P2 (PI4KAP2).